We begin with the raw amino-acid sequence, 643 residues long: Protein THEMIS2 (643 aa).

2 CABIT regions span residues Met-1–Ser-238 and Arg-239–Gly-514. The segment at Glu-546–Asp-631 is disordered. The residue at position 593 (Thr-593) is a Phosphothreonine. Residues Pro-609 to Lys-619 are compositionally biased toward basic residues. Position 632 is a phosphotyrosine (Tyr-632).

This sequence belongs to the themis family. In terms of assembly, interacts with VAV1. Interacts with LAT. Interacts constitutively with GRB2, LYN and PLCG2; these interactions increase the activation of PLCG2 and its downstream pathways following B cell receptor stimulation. Post-translationally, phosphorylation at Tyr-632 is induced by LPS. Phosphorylated by Src kinases (Lck or Fyn) following BCR engagement. In terms of tissue distribution, expressed in different endometrial adenocarcinoma cell lines and various other cell lines apart from the prostate cell line LNCaP and the ovarian cancer cell line BG1.

Its subcellular location is the nucleus. It localises to the cytoplasm. In terms of biological role, may constitute a control point in macrophage inflammatory response, promoting LPS-induced TLR4-mediated TNF production. Determines the threshold for activation of B cells by low-affinity and low-avidity ligands via PLCG2 activation and its downstream pathways. The chain is Protein THEMIS2 from Homo sapiens (Human).